We begin with the raw amino-acid sequence, 185 residues long: MDIFTLLMIAAGLSMDNFAVSLASGCNPNIKIKDISKAALLFVAAHLVMFSLGWFGVSVIAERFDAYDHWISFGLLVFIGLRMIKEAAAKKGQQECVNITETFSRLLLIALATSMDALAVGISLSLAGVHFVLSVAAISFFVLITTFFGFKIGGKLGDKLGIKAEIFGGIVLIGIALKILLDAMM.

6 helical membrane-spanning segments follow: residues 3-23 (IFTL…VSLA), 40-60 (LLFV…VSVI), 64-84 (FDAY…LRMI), 102-122 (TFSR…AVGI), 124-144 (LSLA…FVLI), and 165-185 (EIFG…DAMM).

It belongs to the MntP (TC 9.B.29) family.

It is found in the cell inner membrane. In terms of biological role, probably functions as a manganese efflux pump. The polypeptide is Putative manganese efflux pump MntP (Elusimicrobium minutum (strain Pei191)).